Reading from the N-terminus, the 375-residue chain is MLNFKLLKTDGNARRGQLTLNHGVIETPIFMPVGTYGSVKAMSPLELNEIDAQIILGNTFHLWLRPGNDIIAKFGGLHEFMGWNKPILTDSGGFQVFSLGEMRKITEEGVHFSSPINGDKLFLSPEVSMQIQRVLNSDIVMQFDECTPYEIDGRPATTEEAAKSMRMSLRWAKRSMDEFNREENPNALFGIVQGGMFENLRDESLAGLEELNFHGVAIGGLSVGEPKEDMMRVLEHVGPRLPANKPHYLMGVGTPEDLVAGVASGIDMFDCVMPTRNARNGWLFTRFGDIKIKNARYKDDKKPLDESCSCYACRNFSRAYLHHLHRTGEILGARLNTIHNLHYYLDLMREMREAISEGRFQLFVSQFHADRARGS.

The active-site Proton acceptor is the Asp90. Substrate contacts are provided by residues 90-94 (DSGGF), Asp144, Gln193, and Gly220. An RNA binding region spans residues 251 to 257 (GVGTPED). The active-site Nucleophile is the Asp270. Positions 275–279 (TRNAR) are RNA binding; important for wobble base 34 recognition. Cys308, Cys310, Cys313, and His339 together coordinate Zn(2+).

Belongs to the queuine tRNA-ribosyltransferase family. As to quaternary structure, homodimer. Within each dimer, one monomer is responsible for RNA recognition and catalysis, while the other monomer binds to the replacement base PreQ1. It depends on Zn(2+) as a cofactor.

It catalyses the reaction 7-aminomethyl-7-carbaguanine + guanosine(34) in tRNA = 7-aminomethyl-7-carbaguanosine(34) in tRNA + guanine. It participates in tRNA modification; tRNA-queuosine biosynthesis. In terms of biological role, catalyzes the base-exchange of a guanine (G) residue with the queuine precursor 7-aminomethyl-7-deazaguanine (PreQ1) at position 34 (anticodon wobble position) in tRNAs with GU(N) anticodons (tRNA-Asp, -Asn, -His and -Tyr). Catalysis occurs through a double-displacement mechanism. The nucleophile active site attacks the C1' of nucleotide 34 to detach the guanine base from the RNA, forming a covalent enzyme-RNA intermediate. The proton acceptor active site deprotonates the incoming PreQ1, allowing a nucleophilic attack on the C1' of the ribose to form the product. After dissociation, two additional enzymatic reactions on the tRNA convert PreQ1 to queuine (Q), resulting in the hypermodified nucleoside queuosine (7-(((4,5-cis-dihydroxy-2-cyclopenten-1-yl)amino)methyl)-7-deazaguanosine). The chain is Queuine tRNA-ribosyltransferase from Janthinobacterium sp. (strain Marseille) (Minibacterium massiliensis).